We begin with the raw amino-acid sequence, 222 residues long: Cytochrome b6 (222 aa).

The chain crosses the membrane as a helical span at residues 39–59 (IFYCLGGLTLTCFLIQFATGF). Tyr-41 lines the heme b pocket. Cys-42 is a heme c binding site. The heme b site is built by Arg-90, His-93, Arg-94, His-107, and Arg-110. Helical transmembrane passes span 97 to 117 (ASMM…TGGF), 123 to 143 (LTWV…VTGY), and 193 to 213 (LHTF…FLMI). Heme b is bound by residues His-194 and His-209. Residues Arg-214 and Ile-218 each contribute to the heme c site. Ser-219 is a binding site for heme b.

Belongs to the cytochrome b family. PetB subfamily. As to quaternary structure, the 4 large subunits of the cytochrome b6-f complex are cytochrome b6, subunit IV (17 kDa polypeptide, PetD), cytochrome f and the Rieske protein, while the 4 small subunits are PetG, PetL, PetM and PetN. The complex functions as a dimer. The cofactor is heme b. Heme c is required as a cofactor.

It is found in the cellular thylakoid membrane. Component of the cytochrome b6-f complex, which mediates electron transfer between photosystem II (PSII) and photosystem I (PSI), cyclic electron flow around PSI, and state transitions. This chain is Cytochrome b6, found in Synechocystis sp. (strain ATCC 27184 / PCC 6803 / Kazusa).